We begin with the raw amino-acid sequence, 71 residues long: MTFSRRRTSPIKPTDSIDYKNIDLLSQFITEQGKILPRRVNNISAKQQRAITKAIKQARFLTLLPFLNQEI.

It belongs to the bacterial ribosomal protein bS18 family. As to quaternary structure, part of the 30S ribosomal subunit.

It localises to the plastid. The protein resides in the chloroplast. This chain is Small ribosomal subunit protein bS18c (rps18), found in Mesostigma viride (Green alga).